A 278-amino-acid polypeptide reads, in one-letter code: Inositol oxygenase (278 aa).

Residues Arg22 and Asp78–Ser80 each bind substrate. Residues His91, His116, and Asp117 each contribute to the Fe cation site. Residues Lys120 and Gly134–Asp135 each bind substrate. Fe cation-binding residues include His187, His213, and Asp246. His213–Ser214 contributes to the substrate binding site.

This sequence belongs to the myo-inositol oxygenase family. Requires Fe cation as cofactor.

It localises to the cytoplasm. It catalyses the reaction myo-inositol + O2 = D-glucuronate + H2O + H(+). Its pathway is polyol metabolism; myo-inositol degradation into D-glucuronate; D-glucuronate from myo-inositol: step 1/1. The protein is Inositol oxygenase (miox) of Danio rerio (Zebrafish).